The following is a 636-amino-acid chain: MTYELLNTIDDPADLRRLDRRQLGPLANELRAFVLDSVSQTGGHLSSNLGTVELTIALHYVFNTPEDRIVWDVGHQSYPHKILTGRRDQMGSLRQLDGISGFPRRSESPYDTFGTAHSSTSISAALGMALGAKTKGEDRVAIAVIGDGAMSAGMAFEAMNNAGVYKDLPLVVVLNDNDMSISPPVGALNRYLARLMSGQFYAATKKGVEKLLSVAPPVLEFAKRFEEHTKGMFVPATMFEEFGFNYIGPIDGHDLESLVPTLQNIRQRAREGGGPQFLHVVTKKGQGYKLAEADPILYHGPGKFNPQEGIKPSGRPAKVTYTQVFGQWLCDMAAADKRLVGITPAMREGSGMVEFEQRFPDRYYDVGIAEQHAVTFAGGLACEGLKPVVAIYSTFLQRGYDQLIHDVALQNLPVVFALDRAGLVGADGATHAGAYDIAYLRCIPNMMVMTPADENECRQLLSTAFAQDCPTAVRYPRGAGTGVTVQPTLEPLPVGKAEVRRTSTAPAGQRVAILAFGSMVAPASAAAERLDATVVNMRFVKPLDVACVLEMARTHDFVVTAEEGCVMGGAGSACLEALAAAGVATPVLQLGLPDRFVDHGDHAALLAQCGLDANGILASIRERFAVQPRAAAPRVA.

Thiamine diphosphate contacts are provided by residues His-75 and 116–118; that span reads AHS. Mg(2+) is bound at residue Asp-147. Thiamine diphosphate-binding positions include 148-149, Asn-177, Tyr-288, and Glu-370; that span reads GA. Asn-177 lines the Mg(2+) pocket.

It belongs to the transketolase family. DXPS subfamily. In terms of assembly, homodimer. Mg(2+) is required as a cofactor. Requires thiamine diphosphate as cofactor.

It carries out the reaction D-glyceraldehyde 3-phosphate + pyruvate + H(+) = 1-deoxy-D-xylulose 5-phosphate + CO2. Its pathway is metabolic intermediate biosynthesis; 1-deoxy-D-xylulose 5-phosphate biosynthesis; 1-deoxy-D-xylulose 5-phosphate from D-glyceraldehyde 3-phosphate and pyruvate: step 1/1. Its function is as follows. Catalyzes the acyloin condensation reaction between C atoms 2 and 3 of pyruvate and glyceraldehyde 3-phosphate to yield 1-deoxy-D-xylulose-5-phosphate (DXP). The protein is 1-deoxy-D-xylulose-5-phosphate synthase of Ralstonia pickettii (strain 12J).